The primary structure comprises 402 residues: NADH-quinone oxidoreductase subunit D 2 (402 aa).

The protein belongs to the complex I 49 kDa subunit family. As to quaternary structure, NDH-1 is composed of 14 different subunits. Subunits NuoB, C, D, E, F, and G constitute the peripheral sector of the complex.

It is found in the cell inner membrane. It catalyses the reaction a quinone + NADH + 5 H(+)(in) = a quinol + NAD(+) + 4 H(+)(out). Its function is as follows. NDH-1 shuttles electrons from NADH, via FMN and iron-sulfur (Fe-S) centers, to quinones in the respiratory chain. The immediate electron acceptor for the enzyme in this species is believed to be ubiquinone. Couples the redox reaction to proton translocation (for every two electrons transferred, four hydrogen ions are translocated across the cytoplasmic membrane), and thus conserves the redox energy in a proton gradient. This is NADH-quinone oxidoreductase subunit D 2 from Nitrobacter hamburgensis (strain DSM 10229 / NCIMB 13809 / X14).